The sequence spans 827 residues: Striatin homolog (827 aa).

Residues 37–109 (RAHWISEKAE…VEEEEEEDDK (73 aa)) are a coiled coil. Disordered regions lie at residues 99–123 (KVEE…SKDN), 181–270 (KDIN…QLQS), 311–362 (SSVS…DEQS), and 400–459 (EEGN…SELM). Over residues 109–123 (KIPKNREPPKKSKDN) the composition is skewed to basic and acidic residues. Low complexity-rich tracts occupy residues 184–270 (NNNN…QLQS) and 311–334 (SSVS…TSKQ). The span at 337 to 346 (EDPNNVTISK) shows a compositional bias: polar residues. Composition is skewed to low complexity over residues 347–356 (QQQQEQQQQQ), 416–432 (TPTT…STGS), and 439–453 (SSSS…NSNT). 6 WD repeats span residues 495-534 (SHFD…PTKK), 548-593 (GHTG…IDSY), 610-649 (GHQD…QLYT), 709-748 (NNNS…VVHS), 751-790 (AHSN…CIQD), and 797-827 (KYDE…RILN).

The protein belongs to the WD repeat striatin family. Part of the core of STRIPAK complexes.

The protein resides in the cytoplasm. It localises to the membrane. Functionally, calmodulin-binding scaffolding protein which is the center of the striatin-interacting phosphatase and kinase (STRIPAK) complexes. STRIPAK complexes have critical roles in protein (de)phosphorylation and are regulators of multiple signaling pathways including Hippo, MAPK, nuclear receptor and cytoskeleton remodeling. Different types of STRIPAK complexes are involved in a variety of biological processes such as cell growth, differentiation, apoptosis, metabolism and immune regulation. This chain is Striatin homolog (strn), found in Dictyostelium discoideum (Social amoeba).